A 300-amino-acid chain; its full sequence is Very-long-chain enoyl-CoA reductase (300 aa).

A helical membrane pass occupies residues serine 91 to leucine 111. Residue asparagine 163 is glycosylated (N-linked (GlcNAc...) asparagine). Residues valine 191–glutamine 211 traverse the membrane as a helical segment. Asparagine 238 is a glycosylation site (N-linked (GlcNAc...) asparagine). The helical transmembrane segment at isoleucine 243–leucine 263 threads the bilayer.

The protein belongs to the steroid 5-alpha reductase family.

The protein localises to the endoplasmic reticulum membrane. It catalyses the reaction a very-long-chain 2,3-saturated fatty acyl-CoA + NADP(+) = a very-long-chain (2E)-enoyl-CoA + NADPH + H(+). The protein operates within lipid metabolism; fatty acid biosynthesis. Its function is as follows. Catalyzes the last of the four reactions of the long-chain fatty acids elongation cycle. This endoplasmic reticulum-bound enzymatic process, allows the addition of 2 carbons to the chain of long- and very long-chain fatty acids/VLCFAs per cycle. This enzyme reduces the trans-2,3-enoyl-CoA fatty acid intermediate to an acyl-CoA that can be further elongated by entering a new cycle of elongation. Thereby, it participates in the production of VLCFAs of different chain lengths that are involved in multiple biological processes as precursors of membrane lipids and lipid mediators. The protein is Very-long-chain enoyl-CoA reductase (gpsn2) of Dictyostelium discoideum (Social amoeba).